A 309-amino-acid chain; its full sequence is Mycothiol acetyltransferase (309 aa).

N-acetyltransferase domains are found at residues 16 to 158 (ETLA…LDLP) and 166 to 309 (VSVR…RTET). Residue E47 coordinates 1D-myo-inositol 2-(L-cysteinylamino)-2-deoxy-alpha-D-glucopyranoside. 92 to 94 (LVV) contacts acetyl-CoA. Positions 193, 232, and 241 each coordinate 1D-myo-inositol 2-(L-cysteinylamino)-2-deoxy-alpha-D-glucopyranoside. Residues 245-247 (LGI) and 252-258 (QGGGLGK) contribute to the acetyl-CoA site. Position 279 (Y279) interacts with 1D-myo-inositol 2-(L-cysteinylamino)-2-deoxy-alpha-D-glucopyranoside.

It belongs to the acetyltransferase family. MshD subfamily. Monomer.

It carries out the reaction 1D-myo-inositol 2-(L-cysteinylamino)-2-deoxy-alpha-D-glucopyranoside + acetyl-CoA = mycothiol + CoA + H(+). Catalyzes the transfer of acetyl from acetyl-CoA to desacetylmycothiol (Cys-GlcN-Ins) to form mycothiol. This chain is Mycothiol acetyltransferase, found in Streptomyces coelicolor (strain ATCC BAA-471 / A3(2) / M145).